We begin with the raw amino-acid sequence, 147 residues long: Ribonuclease P protein component (147 aa).

The segment at 117 to 147 is disordered; the sequence is TRPRGQSSHRTRASREATSAHTTAVGEQPTQ.

This sequence belongs to the RnpA family. In terms of assembly, consists of a catalytic RNA component (M1 or rnpB) and a protein subunit.

It carries out the reaction Endonucleolytic cleavage of RNA, removing 5'-extranucleotides from tRNA precursor.. Its function is as follows. RNaseP catalyzes the removal of the 5'-leader sequence from pre-tRNA to produce the mature 5'-terminus. It can also cleave other RNA substrates such as 4.5S RNA. The protein component plays an auxiliary but essential role in vivo by binding to the 5'-leader sequence and broadening the substrate specificity of the ribozyme. In Thermobifida fusca (strain YX), this protein is Ribonuclease P protein component.